The chain runs to 703 residues: RING finger protein 214 (703 aa).

Disordered stretches follow at residues 1–59 (MAAS…TITK), 104–134 (GSQS…VTRS), and 146–197 (SRNC…SSSL). Residue Ala-2 is modified to N-acetylalanine. Phosphoserine is present on residues Ser-15, Ser-40, Ser-47, and Ser-54. Positions 37–59 (TKDSAQKQKNSPLLSVSSQTITK) are enriched in polar residues. Phosphoserine is present on residues Ser-176 and Ser-196. The stretch at 220–379 (QDIEKNLDKM…AEKEAELHLT (160 aa)) forms a coiled coil. The segment at 486 to 552 (FPILNPALSQ…SAETPRPQPV (67 aa)) is disordered. Over residues 493–504 (LSQPSQPSSPLP) the composition is skewed to low complexity. Phosphoserine is present on residues Ser-497, Ser-511, and Ser-516. Residues 523 to 536 (PHMPPAASIPPPPG) show a composition bias toward pro residues. The RING-type; atypical zinc-finger motif lies at 658-700 (CLMCQKLVQPSELHPMACTHVLHKECIKFWAQTNTNDTCPFCP).

This chain is RING finger protein 214 (RNF214), found in Homo sapiens (Human).